A 329-amino-acid chain; its full sequence is COP9 signalosome complex subunit 6 (329 aa).

The MPN domain occupies 44-175 (TRVKAQAACS…VTIYESELHV (132 aa)).

This sequence belongs to the peptidase M67A family. CSN6 subfamily. In terms of assembly, component of the CSN complex, probably composed of CSN1, CSN2, CSN3, CSN4, CSN5, CSN6, CSN7 and CSN8.

Component of the COP9 signalosome complex (CSN), a complex involved in various cellular and developmental processes such as photomorphogenesis and response to hormones. The CSN complex is an essential regulator of the ubiquitin (Ubl) conjugation pathway by mediating the deneddylation of the cullin subunits of SCF-type E3 ligase complexes, leading to decrease the Ubl ligase activity of SCF. Involved in early response to iron deficiency. This chain is COP9 signalosome complex subunit 6, found in Oryza sativa subsp. japonica (Rice).